The following is a 425-amino-acid chain: Serine--tRNA ligase (425 aa).

Position 233-235 (233-235 (TAE)) interacts with L-serine. 264-266 (RAE) contacts ATP. L-serine is bound at residue E287. Position 351-354 (351-354 (EISS)) interacts with ATP. An L-serine-binding site is contributed by S387.

This sequence belongs to the class-II aminoacyl-tRNA synthetase family. Type-1 seryl-tRNA synthetase subfamily. Homodimer. The tRNA molecule binds across the dimer.

The protein localises to the cytoplasm. It carries out the reaction tRNA(Ser) + L-serine + ATP = L-seryl-tRNA(Ser) + AMP + diphosphate + H(+). It catalyses the reaction tRNA(Sec) + L-serine + ATP = L-seryl-tRNA(Sec) + AMP + diphosphate + H(+). It functions in the pathway aminoacyl-tRNA biosynthesis; selenocysteinyl-tRNA(Sec) biosynthesis; L-seryl-tRNA(Sec) from L-serine and tRNA(Sec): step 1/1. Catalyzes the attachment of serine to tRNA(Ser). Is also able to aminoacylate tRNA(Sec) with serine, to form the misacylated tRNA L-seryl-tRNA(Sec), which will be further converted into selenocysteinyl-tRNA(Sec). The chain is Serine--tRNA ligase from Clostridium perfringens (strain SM101 / Type A).